The following is a 185-amino-acid chain: Large ribosomal subunit protein uL5 (185 aa).

It belongs to the universal ribosomal protein uL5 family. Part of the 50S ribosomal subunit; part of the 5S rRNA/L5/L18/L25 subcomplex. Contacts the 5S rRNA and the P site tRNA. Forms a bridge to the 30S subunit in the 70S ribosome.

Functionally, this is one of the proteins that bind and probably mediate the attachment of the 5S RNA into the large ribosomal subunit, where it forms part of the central protuberance. In the 70S ribosome it contacts protein S13 of the 30S subunit (bridge B1b), connecting the 2 subunits; this bridge is implicated in subunit movement. Contacts the P site tRNA; the 5S rRNA and some of its associated proteins might help stabilize positioning of ribosome-bound tRNAs. The polypeptide is Large ribosomal subunit protein uL5 (Rhodopseudomonas palustris (strain BisB5)).